The following is a 165-amino-acid chain: Chorismate pyruvate-lyase (165 aa).

Substrate-binding residues include M35, R77, L115, and E156.

This sequence belongs to the UbiC family. As to quaternary structure, monomer.

It is found in the cytoplasm. It catalyses the reaction chorismate = 4-hydroxybenzoate + pyruvate. It participates in cofactor biosynthesis; ubiquinone biosynthesis. Its function is as follows. Removes the pyruvyl group from chorismate, with concomitant aromatization of the ring, to provide 4-hydroxybenzoate (4HB) for the ubiquinone pathway. In Salmonella schwarzengrund (strain CVM19633), this protein is Chorismate pyruvate-lyase.